We begin with the raw amino-acid sequence, 142 residues long: Large ribosomal subunit protein uL13 (142 aa).

This sequence belongs to the universal ribosomal protein uL13 family. Part of the 50S ribosomal subunit.

Its function is as follows. This protein is one of the early assembly proteins of the 50S ribosomal subunit, although it is not seen to bind rRNA by itself. It is important during the early stages of 50S assembly. This Pseudomonas syringae pv. syringae (strain B728a) protein is Large ribosomal subunit protein uL13.